We begin with the raw amino-acid sequence, 686 residues long: Tripartite terminase subunit 3 (686 aa).

The Walker A motif signature appears at 219-226 (IPRRHGKT). The Walker B motif signature appears at 314–319 (LLYVDE). Catalysis depends on Glu319, which acts as the For ATPase activity. Residues Asp475, Glu548, and Asp660 each act as for nuclease activity in the active site.

This sequence belongs to the herpesviridae TRM3 protein family. In terms of assembly, interacts with the terminase subunits TRM1 and TRM2. Interacts with portal protein.

The protein resides in the host nucleus. In terms of biological role, component of the molecular motor that translocates viral genomic DNA in empty capsid during DNA packaging. Forms a tripartite terminase complex together with TRM1 and TRM2 in the host cytoplasm. Once the complex reaches the host nucleus, it interacts with the capsid portal vertex. This portal forms a ring in which genomic DNA is translocated into the capsid. TRM3 carries an RNase H-like nuclease activity that plays an important role for the cleavage of concatemeric viral DNA into unit length genomes. The protein is Tripartite terminase subunit 3 of Equine herpesvirus 2 (strain 86/87) (EHV-2).